A 412-amino-acid polypeptide reads, in one-letter code: Sexual development regulator umv3 (412 aa).

The disordered stretch occupies residues 1 to 197; sequence MSAQDDIDTG…PPLLSDLPRH (197 aa). Polar residues-rich tracts occupy residues 73–93 and 149–170; these read RANTLSKQQPRGDLSQSSASS and RQSAASNRLSDTNSSAPSPGST. Basic and acidic residues predominate over residues 171-181; that stretch reads ENERVRMHDQR. Residues 195–388 form the Velvet domain; sequence PRHSTDNKTY…ARQGIQVPVR (194 aa).

It belongs to the velvet family. VelC subfamily.

It is found in the nucleus. Its function is as follows. Velvet-domain-containing protein not required for disease or sexual development on seedlings. This chain is Sexual development regulator umv3, found in Mycosarcoma maydis (Corn smut fungus).